A 546-amino-acid chain; its full sequence is Putative inactive G-type lectin S-receptor-like serine/threonine-protein kinase SRK (546 aa).

A signal peptide spans 1–31 (MRGELPNKHHSYTFFVFLFFFLILFPDLSIS). The Extracellular portion of the chain corresponds to 32 to 441 (VNTLSATESL…FGERRTIRGK (410 aa)). Residues 34–154 (TLSATESLTI…KINESDEFLW (121 aa)) enclose the Bulb-type lectin domain. N-linked (GlcNAc...) asparagine glycosylation is found at Asn46, Asn120, Asn147, and Asn243. Residues 293–329 (PKDTCDLYGICGPYAYCDMSTSPTCNCIKGFQPLSPQ) enclose the EGF-like; atypical domain. Cystine bridges form between Cys297/Cys309, Cys303/Cys317, Cys378/Cys403, and Cys382/Cys388. The PAN domain maps to 348 to 428 (CGEDRFFRLM…DGQDLFVRLA (81 aa)). Asn387 is a glycosylation site (N-linked (GlcNAc...) asparagine). Residues 442–462 (IIGLIIGISLMLVLSFIIYCF) traverse the membrane as a helical segment. At 463–546 (WKKKQKRARA…IVYKGRLLDG (84 aa)) the chain is on the cytoplasmic side. Positions 524–546 (FSDSNILGRGGFGIVYKGRLLDG) constitute a Protein kinase domain. 530-538 (LGRGGFGIV) contributes to the ATP binding site.

Belongs to the protein kinase superfamily. Ser/Thr protein kinase family.

The protein resides in the cell membrane. In terms of biological role, truncated and inactivated form of SRK, the female specificity determinant of self-incompatibility when active. Most A.thaliana cultivars contain such an inactive form and thus, are self-fertiles. This chain is Putative inactive G-type lectin S-receptor-like serine/threonine-protein kinase SRK (PSEUDOSRKA), found in Arabidopsis thaliana (Mouse-ear cress).